Here is a 605-residue protein sequence, read N- to C-terminus: Tegument protein UL47 homolog (605 aa).

Residues 1–75 (MATDNARPRS…DPWKLEPAND (75 aa)) form a disordered region. The span at 8–17 (PRSRSLRRKS) shows a compositional bias: basic residues. A compositionally biased stretch (basic and acidic residues) spans 54–69 (GADRDPGTRRGIDPWK).

This sequence belongs to the alphaherpesvirinae HHV-1 UL47 family. As to quaternary structure, interacts with US3 kinase. Interacts with UL31 and UL34; these interactions seem important for efficient virion nuclear egress. Interacts with UL41/VHS. Phosphorylated by US3. This phosphorylation is required for proper nuclear localization.

The protein localises to the virion tegument. It is found in the host nucleus. Its subcellular location is the host cytoplasm. Tegument protein that can bind to various RNA transcripts. Plays a role in the attenuation of selective viral and cellular mRNA degradation by modulating the activity of host shutoff RNase UL41/VHS. Also plays a role in the primary envelopment of virions in the perinuclear space, probably by interacting with two nuclear egress proteins UL31 and UL34. The polypeptide is Tegument protein UL47 homolog (sORF1) (Amazona oratrix (yellow-headed parrot)).